A 364-amino-acid polypeptide reads, in one-letter code: tRNA 2-selenouridine synthase (364 aa).

The Rhodanese domain occupies 14–137 (LIADTPIIDV…LRQTAIQATI (124 aa)). Residue C97 is the S-selanylcysteine intermediate of the active site.

It belongs to the SelU family. In terms of assembly, monomer.

The enzyme catalyses 5-methylaminomethyl-2-thiouridine(34) in tRNA + selenophosphate + (2E)-geranyl diphosphate + H2O + H(+) = 5-methylaminomethyl-2-selenouridine(34) in tRNA + (2E)-thiogeraniol + phosphate + diphosphate. It carries out the reaction 5-methylaminomethyl-2-thiouridine(34) in tRNA + (2E)-geranyl diphosphate = 5-methylaminomethyl-S-(2E)-geranyl-thiouridine(34) in tRNA + diphosphate. It catalyses the reaction 5-methylaminomethyl-S-(2E)-geranyl-thiouridine(34) in tRNA + selenophosphate + H(+) = 5-methylaminomethyl-2-(Se-phospho)selenouridine(34) in tRNA + (2E)-thiogeraniol. The catalysed reaction is 5-methylaminomethyl-2-(Se-phospho)selenouridine(34) in tRNA + H2O = 5-methylaminomethyl-2-selenouridine(34) in tRNA + phosphate. Functionally, involved in the post-transcriptional modification of the uridine at the wobble position (U34) of tRNA(Lys), tRNA(Glu) and tRNA(Gln). Catalyzes the conversion of 2-thiouridine (S2U-RNA) to 2-selenouridine (Se2U-RNA). Acts in a two-step process involving geranylation of 2-thiouridine (S2U) to S-geranyl-2-thiouridine (geS2U) and subsequent selenation of the latter derivative to 2-selenouridine (Se2U) in the tRNA chain. In Escherichia coli (strain K12 / MC4100 / BW2952), this protein is tRNA 2-selenouridine synthase.